Consider the following 466-residue polypeptide: Glutamate decarboxylase beta (466 aa).

Thr62 and Asn83 together coordinate substrate. Pyridoxal 5'-phosphate contacts are provided by residues 126-127 (SS), Thr212, and His275. Lys276 carries the post-translational modification N6-(pyridoxal phosphate)lysine. N6-acetyllysine is present on residues Lys446, Lys453, and Lys464.

Belongs to the group II decarboxylase family. Homohexamer composed of three dimers. Requires pyridoxal 5'-phosphate as cofactor.

The catalysed reaction is L-glutamate + H(+) = 4-aminobutanoate + CO2. Its function is as follows. Converts glutamate to gamma-aminobutyrate (GABA), consuming one intracellular proton in the reaction. The gad system helps to maintain a near-neutral intracellular pH when cells are exposed to extremely acidic conditions. The ability to survive transit through the acidic conditions of the stomach is essential for successful colonization of the mammalian host by commensal and pathogenic bacteria. This chain is Glutamate decarboxylase beta (gadB), found in Shigella flexneri.